The sequence spans 1372 residues: DNA-directed RNA polymerase subunit beta (1372 aa).

Belongs to the RNA polymerase beta chain family. The RNAP catalytic core consists of 2 alpha, 1 beta, 1 beta' and 1 omega subunit. When a sigma factor is associated with the core the holoenzyme is formed, which can initiate transcription.

It carries out the reaction RNA(n) + a ribonucleoside 5'-triphosphate = RNA(n+1) + diphosphate. Functionally, DNA-dependent RNA polymerase catalyzes the transcription of DNA into RNA using the four ribonucleoside triphosphates as substrates. The sequence is that of DNA-directed RNA polymerase subunit beta from Rickettsia bellii (strain OSU 85-389).